An 84-amino-acid polypeptide reads, in one-letter code: Toxin To7 (84 aa).

A signal peptide spans 1 to 20 (MSIFPIVLALLLIGLEETEA). The 63-residue stretch at 21–83 (LDGYPLSKIN…KMYPGSSPCY (63 aa)) folds into the LCN-type CS-alpha/beta domain. 4 cysteine pairs are disulfide-bonded: cysteine 32–cysteine 82, cysteine 36–cysteine 59, cysteine 42–cysteine 64, and cysteine 46–cysteine 66.

Expressed by the venom gland.

The protein resides in the secreted. In terms of biological role, inhibits voltage-gated sodium channels (Nav). The chain is Toxin To7 from Tityus obscurus (Amazonian scorpion).